Reading from the N-terminus, the 81-residue chain is uncharacterized protein (81 aa).

Positions 1–20 are cleaved as a signal peptide; sequence MIDDHEALLLLVLSSGPAAL.

This is an uncharacterized protein from Treponema pallidum (strain Nichols).